Here is a 224-residue protein sequence, read N- to C-terminus: MSVVALVPAAGRGVRLGAGVPKALVPVAGESLLSRAVRGLHDSGRVRHVVVAAPADEVPAVEAELASLRSFVHVVPGGAERTDSVRLALAEAERVVPDARVVLVHDAARAFTPPSVVRDVVRAVEEGAPAVVPVLPVADTIKQVDEAGDVETTVDRSRLRTVQTPQGFAIDVLRQAYAAAGDIATDDAGLVERIGGKVSTVPGHPHALKITTAFDLAIAEAVLA.

This sequence belongs to the IspD/TarI cytidylyltransferase family. IspD subfamily.

The enzyme catalyses 2-C-methyl-D-erythritol 4-phosphate + CTP + H(+) = 4-CDP-2-C-methyl-D-erythritol + diphosphate. The protein operates within isoprenoid biosynthesis; isopentenyl diphosphate biosynthesis via DXP pathway; isopentenyl diphosphate from 1-deoxy-D-xylulose 5-phosphate: step 2/6. In terms of biological role, catalyzes the formation of 4-diphosphocytidyl-2-C-methyl-D-erythritol from CTP and 2-C-methyl-D-erythritol 4-phosphate (MEP). The polypeptide is 2-C-methyl-D-erythritol 4-phosphate cytidylyltransferase (Saccharopolyspora erythraea (strain ATCC 11635 / DSM 40517 / JCM 4748 / NBRC 13426 / NCIMB 8594 / NRRL 2338)).